The chain runs to 161 residues: Endoribonuclease YbeY (161 aa).

Zn(2+)-binding residues include His121, His125, and His131.

Belongs to the endoribonuclease YbeY family. Zn(2+) serves as cofactor.

It localises to the cytoplasm. In terms of biological role, single strand-specific metallo-endoribonuclease involved in late-stage 70S ribosome quality control and in maturation of the 3' terminus of the 16S rRNA. The polypeptide is Endoribonuclease YbeY (Stenotrophomonas maltophilia (strain K279a)).